Reading from the N-terminus, the 396-residue chain is Orotidine 5'-phosphate decarboxylase (396 aa).

Substrate-binding positions include D46, 68 to 70 (KTH), 103 to 112 (DRKFVDIGST), Y346, and R365. K105 acts as the Proton donor in catalysis.

Belongs to the OMP decarboxylase family.

It catalyses the reaction orotidine 5'-phosphate + H(+) = UMP + CO2. It participates in pyrimidine metabolism; UMP biosynthesis via de novo pathway; UMP from orotate: step 2/2. In Sordaria macrospora (strain ATCC MYA-333 / DSM 997 / K(L3346) / K-hell), this protein is Orotidine 5'-phosphate decarboxylase (URA3).